The chain runs to 753 residues: Inactive protein-tyrosine phosphatase egg-5 (753 aa).

2 disordered regions span residues 26–46 (TSLQ…STDN) and 77–116 (RKKV…YAAP). Residues 35 to 46 (NTDDSSADSTDN) are compositionally biased toward low complexity. Residues 84–94 (AQKDRRSKERL) show a composition bias toward basic and acidic residues. In terms of domain architecture, Tyrosine-protein phosphatase spans 408-661 (MERRFEILEN…IFVHRLVAFF (254 aa)).

Belongs to the protein-tyrosine phosphatase family. In terms of assembly, part of a complex, consisting of pseudophosphatases egg-3, egg-4, egg-5 and kinase mbk-2; this complex is required for the oocyte-to-zygote transition. Interacts (via tyrosine-protein phosphatase domain) with kinase mbk-2 (via 'Tyr-619' and 'Tyr-621'); mbk-2 tyrosine phosphorylation enhances the interaction.

Its subcellular location is the cytoplasm. It localises to the cell cortex. Inactive phosphatase which acts redundantly with egg-4 in the oocyte-to-zygote transition. Required for polarized cortical actin cytoskeleton rearrangement in the oocyte before and after fertilization. Together with egg-4, required for the cortical localization of kinase mbk-2 in maturing oocyte until the end of meiosis I. Also required for kinase mbk-2, pseudophosphatase egg-3 and chitin synthase chs-1 localization to cytoplasmic foci after fertilization. The polypeptide is Inactive protein-tyrosine phosphatase egg-5 (Caenorhabditis elegans).